A 153-amino-acid chain; its full sequence is Pheromone-binding protein Gp-9 (153 aa).

The N-terminal stretch at 1 to 19 (MKTFVLHIFIFALVAFASA) is a signal peptide. 3 cysteine pairs are disulfide-bonded: C37-C77, C73-C129, and C118-C138.

Belongs to the PBP/GOBP family. In terms of assembly, homodimer.

Its subcellular location is the secreted. Functionally, colony queen number, a major feature of social organization, is associated with worker genotype for Gp-9. Colonies are headed by either a single reproductive queen (monogyne form) or multiple queens (polygyne form). Differences in worker Gp-9 genotypes between social forms may cause differences in workers' abilities to recognize queens and regulate their numbers. The chain is Pheromone-binding protein Gp-9 from Solenopsis richteri (Black imported fire ant).